A 341-amino-acid chain; its full sequence is Mitochondrial protein C2orf69 homolog (341 aa).

Residues 1–35 (MLQVVQSPHNLVFMGSIRSVVACLSLAAVARKMTA) constitute a mitochondrion transit peptide.

It belongs to the C2orf69 family.

The protein resides in the mitochondrion matrix. Functionally, may play a role in the respiratory chain. The protein is Mitochondrial protein C2orf69 homolog of Danio rerio (Zebrafish).